The following is an 89-amino-acid chain: Large ribosomal subunit protein bL27 (89 aa).

This sequence belongs to the bacterial ribosomal protein bL27 family.

This chain is Large ribosomal subunit protein bL27, found in Ruegeria sp. (strain TM1040) (Silicibacter sp.).